The primary structure comprises 144 residues: Large ribosomal subunit protein uL11 (144 aa).

Belongs to the universal ribosomal protein uL11 family. Part of the ribosomal stalk of the 50S ribosomal subunit. Interacts with L10 and the large rRNA to form the base of the stalk. L10 forms an elongated spine to which L12 dimers bind in a sequential fashion forming a multimeric L10(L12)X complex. Post-translationally, one or more lysine residues are methylated.

Forms part of the ribosomal stalk which helps the ribosome interact with GTP-bound translation factors. The sequence is that of Large ribosomal subunit protein uL11 from Deinococcus geothermalis (strain DSM 11300 / CIP 105573 / AG-3a).